A 132-amino-acid polypeptide reads, in one-letter code: Large ribosomal subunit protein uL14 (132 aa).

This sequence belongs to the universal ribosomal protein uL14 family. The L3/L14/L24e cluster may contact the 16S rRNA in 2 intersubunit bridges. Part of the 50S ribosomal subunit. Forms a cluster with proteins L3 and L24e.

Functionally, forms part of two intersubunit bridges in the 70S ribosome. Binds to 23S rRNA. The sequence is that of Large ribosomal subunit protein uL14 from Haloarcula marismortui (strain ATCC 43049 / DSM 3752 / JCM 8966 / VKM B-1809) (Halobacterium marismortui).